The primary structure comprises 452 residues: Tripartite motif-containing protein 51 (452 aa).

The RING-type zinc-finger motif lies at 15–56; sequence CPICMNYFLDPVTIDCGHSFCRPCLYLNWQDTAVLAQCSECK. The segment at 88–129 adopts a B box-type zinc-finger fold; sequence SEEQICGMHRETKKMFCEVDKSLLCLPCSNSQEHRNHIHCPI. Cys-93, His-96, Cys-115, and His-121 together coordinate Zn(2+). In terms of domain architecture, B30.2/SPRY spans 269 to 452; it reads ELSAGPITGL…LRPIFCCSHF (184 aa).

This sequence belongs to the TRIM/RBCC family.

The chain is Tripartite motif-containing protein 51 (TRIM51) from Homo sapiens (Human).